A 262-amino-acid polypeptide reads, in one-letter code: MFLFSRKTKTPISTYSDSYRAPTSIKEVYKDPPLCAWEANKFLTPGLTHTMEQHVDPEALQKMAKCAVQDYTYRGPISGHPYLPEKYWLSQEEADKCSPNYLGSNRYNTWRMEPYNSSCCNKYTTYLPRLPKEAGMETAVRGMPLECPPKPERLNAYEREVMVNMLNSLSRNQQLPRITPRCGCVDPLPGRLPFHGYESACSGRHYCLRGMDYYASGAPCTDRRLRPWCRELPTLCTSLRAPARNAVCCYNSPAVILPISEP.

The protein belongs to the SPMIP6 family. In terms of assembly, microtubule inner protein component of sperm flagellar doublet microtubules. Interacts with alpha-tubulin.

Its subcellular location is the cytoplasm. It localises to the cytoskeleton. The protein localises to the nucleus. It is found in the mitochondrion. The protein resides in the flagellum axoneme. Functionally, may participate in intramanchette transport and midpiece formation of the sperm tail. May play a potential role in somatic cell proliferation. The chain is Sperm microtubule inner protein 6 (SPMIP6) from Macaca fascicularis (Crab-eating macaque).